The primary structure comprises 438 residues: Xylose isomerase (438 aa).

Catalysis depends on residues histidine 100 and aspartate 103. Positions 231, 267, 270, 295, 306, 308, and 338 each coordinate Mg(2+).

Belongs to the xylose isomerase family. As to quaternary structure, homotetramer. The cofactor is Mg(2+).

The protein resides in the cytoplasm. The catalysed reaction is alpha-D-xylose = alpha-D-xylulofuranose. The protein is Xylose isomerase of Thermoanaerobacter sp. (strain X514).